We begin with the raw amino-acid sequence, 142 residues long: MLQHKILGLDVGSRTVGIAISDIMGWTAQGLDTLRINEENNELGIDQLVDIIKKHNVGTVVIGLPKNMNNSIGFRGEASLTYKEKLLEAYPSIEIVMWDERLSTMAAERSLLEADVSRQKRKQLIDKMAAVFILQGYLDSLH.

This sequence belongs to the YqgF nuclease family.

The protein localises to the cytoplasm. Could be a nuclease involved in processing of the 5'-end of pre-16S rRNA. The chain is Putative pre-16S rRNA nuclease from Staphylococcus aureus (strain bovine RF122 / ET3-1).